Consider the following 243-residue polypeptide: uncharacterized protein (243 aa).

A signal peptide spans 1-19 (MKSLPLLGILAFAANRLSA). Residues Asn-112 and Asn-206 are each glycosylated (N-linked (GlcNAc...) asparagine).

This is an uncharacterized protein from Encephalitozoon cuniculi (strain GB-M1) (Microsporidian parasite).